The primary structure comprises 156 residues: Endoribonuclease YbeY (156 aa).

Histidine 111, histidine 115, and histidine 121 together coordinate Zn(2+).

Belongs to the endoribonuclease YbeY family. Zn(2+) is required as a cofactor.

It is found in the cytoplasm. In terms of biological role, single strand-specific metallo-endoribonuclease involved in late-stage 70S ribosome quality control and in maturation of the 3' terminus of the 16S rRNA. The polypeptide is Endoribonuclease YbeY (Hahella chejuensis (strain KCTC 2396)).